The primary structure comprises 232 residues: Probable proteasome subunit alpha type-5 (232 aa).

The protein belongs to the peptidase T1A family. As to quaternary structure, the 26S proteasome consists of a 20S proteasome core and two 19S regulatory subunits. The 20S proteasome core is composed of 28 subunits that are arranged in four stacked rings, resulting in a barrel-shaped structure. The two end rings are each formed by seven alpha subunits, and the two central rings are each formed by seven beta subunits. The catalytic chamber with the active sites is on the inside of the barrel.

Its subcellular location is the cytoplasm. It is found in the nucleus. In terms of biological role, the proteasome degrades poly-ubiquitinated proteins in the cytoplasm and in the nucleus. It is essential for the regulated turnover of proteins and for the removal of misfolded proteins. The proteasome is a multicatalytic proteinase complex that is characterized by its ability to cleave peptides with Arg, Phe, Tyr, Leu, and Glu adjacent to the leaving group at neutral or slightly basic pH. It has an ATP-dependent proteolytic activity. This chain is Probable proteasome subunit alpha type-5 (PUP2), found in Encephalitozoon cuniculi (strain GB-M1) (Microsporidian parasite).